The following is a 311-amino-acid chain: Fluoride export protein 1 (311 aa).

The Cytoplasmic portion of the chain corresponds to 1–6; the sequence is MLLTQS. The chain crosses the membrane as a helical span at residues 7–25; the sequence is YFCIMSMLGTLARLGLTAL. The Extracellular segment spans residues 26 to 29; sequence NTYP. A helical membrane pass occupies residues 30 to 50; the sequence is GAPFSGLLWVQFVGCVIMGFC. Over 51–65 the chain is Cytoplasmic; it reads QTESVFFPRPKHNAT. A helical transmembrane segment spans residues 66–86; sequence FLLAITTGFCGSLTTFSSWML. Over 87 to 106 the chain is Extracellular; the sequence is QMFTGMANLDPFERRGRGYS. A helical transmembrane segment spans residues 107-127; sequence FLSVVSDFMVTMCIAMSSLIW. The Cytoplasmic segment spans residues 128–154; that stretch reads GKQIGKTTGQWRIGKVAFAWPIPAHTH. Residues 155 to 175 traverse the membrane as a helical segment; sequence IVVRVLLLLLSICFFVGAAFY. Residues 176 to 186 are Extracellular-facing; sequence TAYTTNVTHRG. An N-linked (GlcNAc...) asparagine glycan is attached at Asn-181. A helical membrane pass occupies residues 187-207; it reads IGFSLIFSPFAALTRLYLARF. The Cytoplasmic portion of the chain corresponds to 208–212; it reads LNSPQ. Residues 213–233 form a helical membrane-spanning segment; it reads YFIPYGTLCANVFATLLLSIM. At 234 to 250 the chain is on the extracellular side; that stretch reads YMIPQITHCTPVSRSVM. The chain crosses the membrane as a helical span at residues 251 to 268; it reads YGIQNGFCAVLSTLSTFS. Over 269 to 278 the chain is Cytoplasmic; the sequence is NELHTMPIKR. Residues 279–299 traverse the membrane as a helical segment; the sequence is AYIYCIISVAISFSICVIVDG. Over 300–311 the chain is Extracellular; that stretch reads ATAWGHGYTEKY.

It belongs to the fluoride channel Fluc/FEX (TC 1.A.43) family.

Its subcellular location is the cell membrane. The catalysed reaction is fluoride(in) = fluoride(out). Functionally, fluoride channel required for the rapid expulsion of cytoplasmic fluoride. This is Fluoride export protein 1 (fex1) from Schizosaccharomyces pombe (strain 972 / ATCC 24843) (Fission yeast).